The chain runs to 370 residues: Sensor histidine kinase DesK (370 aa).

At 1 to 10 (MIKNHFTFQK) the chain is on the extracellular side. Residues 11 to 31 (LNGITPYIWTIFFILPFYFIW) form a helical membrane-spanning segment. Topologically, residues 32–36 (KSSST) are cytoplasmic. Residues 37 to 57 (FVIIVGIILTLLFFSVYRFAF) traverse the membrane as a helical segment. At 58 to 70 (VSKGWTIYLWGFL) the chain is on the extracellular side. The helical transmembrane segment at 71-91 (LIGISTASITLFSYIYFAFFI) threads the bilayer. At 92-103 (AYFIGNIKERVP) the chain is on the cytoplasmic side. Residues 104 to 124 (FHILYYVHLISAAVAANFSLV) traverse the membrane as a helical segment. Residues 125–128 (LKKE) lie on the Extracellular side of the membrane. A helical membrane pass occupies residues 129–149 (FFLTQIPFVVITLISAILLPF). Over 150–370 (SIKSRKERER…LTMAIPNNSK (221 aa)) the chain is Cytoplasmic. Positions 186-369 (DLHDTLGQKL…KLTMAIPNNS (184 aa)) constitute a Histidine kinase domain. Histidine 188 carries the post-translational modification Phosphohistidine; by autocatalysis.

The protein resides in the cell membrane. The enzyme catalyses ATP + protein L-histidine = ADP + protein N-phospho-L-histidine.. Functionally, member of the two-component regulatory system DesR/DesK, responsible for cold induction of the des gene coding for the Delta5 acyl-lipid desaturase. Acts as a sensor of the membrane fluidity. Probably activates DesR by phosphorylation. In Bacillus subtilis (strain 168), this protein is Sensor histidine kinase DesK (desK).